Reading from the N-terminus, the 167-residue chain is MNVNEIIKGPILTEKSYQLMSSGVYSFKVSPKTNRSETKKAVEYIFNVKVEKVNIFTVPKKEKKLGKSKGFTTKYKKALVKLMPGYTINLFEDESPQDQKDSETVSENTEEKAKIAKKKAELEAKNKEIAEKLAKKQAELAKKDSETNENQEKRIENQTENQENSAN.

Positions Met1–Lys118 are large ribosomal subunit protein uL23. 2 disordered regions span residues Phe91 to Lys112 and Lys136 to Asn167. Basic and acidic residues-rich tracts occupy residues Gln97–Lys112 and Lys136–Asn157. The unknown stretch occupies residues Lys119 to Asn167. A compositionally biased stretch (polar residues) spans Gln158–Asn167.

This sequence belongs to the universal ribosomal protein uL23 family. Part of the 50S ribosomal subunit. Contacts protein L29, and trigger factor when it is bound to the ribosome.

In terms of biological role, one of the early assembly proteins it binds 23S rRNA. One of the proteins that surrounds the polypeptide exit tunnel on the outside of the ribosome. Forms the main docking site for trigger factor binding to the ribosome. This chain is Large ribosomal subunit protein uL23, found in Mesomycoplasma hyopneumoniae (strain J / ATCC 25934 / NCTC 10110) (Mycoplasma hyopneumoniae).